The following is a 195-amino-acid chain: UPF0301 protein CCNA_03506 (195 aa).

This sequence belongs to the UPF0301 (AlgH) family.

In Caulobacter vibrioides (strain NA1000 / CB15N) (Caulobacter crescentus), this protein is UPF0301 protein CCNA_03506.